Here is a 350-residue protein sequence, read N- to C-terminus: Arginine N-succinyltransferase (350 aa).

Leu-125 contacts succinyl-CoA. The active-site Proton donor is His-229.

This sequence belongs to the arginine N-succinyltransferase family.

The enzyme catalyses succinyl-CoA + L-arginine = N(2)-succinyl-L-arginine + CoA + H(+). Its pathway is amino-acid degradation; L-arginine degradation via AST pathway; L-glutamate and succinate from L-arginine: step 1/5. In terms of biological role, catalyzes the transfer of succinyl-CoA to arginine to produce N(2)-succinylarginine. In Yersinia pestis, this protein is Arginine N-succinyltransferase.